The following is a 137-amino-acid chain: Small ribosomal subunit protein uS9 (137 aa).

The disordered stretch occupies residues 105–137; it reads LKAEGYLTRDPRAKERKKYGLHKARKAPQYSKR. Basic residues predominate over residues 118–137; it reads KERKKYGLHKARKAPQYSKR.

Belongs to the universal ribosomal protein uS9 family.

The protein is Small ribosomal subunit protein uS9 (rpsI) of Synechocystis sp. (strain ATCC 27184 / PCC 6803 / Kazusa).